Here is a 209-residue protein sequence, read N- to C-terminus: Imidazole glycerol phosphate synthase subunit HisH (209 aa).

A Glutamine amidotransferase type-1 domain is found at 1–205; the sequence is MIAIIDYGMG…KGVVETWKSS (205 aa). Residue Cys-79 is the Nucleophile of the active site. Active-site residues include His-180 and Glu-182.

Heterodimer of HisH and HisF.

It localises to the cytoplasm. It carries out the reaction 5-[(5-phospho-1-deoxy-D-ribulos-1-ylimino)methylamino]-1-(5-phospho-beta-D-ribosyl)imidazole-4-carboxamide + L-glutamine = D-erythro-1-(imidazol-4-yl)glycerol 3-phosphate + 5-amino-1-(5-phospho-beta-D-ribosyl)imidazole-4-carboxamide + L-glutamate + H(+). The enzyme catalyses L-glutamine + H2O = L-glutamate + NH4(+). It participates in amino-acid biosynthesis; L-histidine biosynthesis; L-histidine from 5-phospho-alpha-D-ribose 1-diphosphate: step 5/9. Functionally, IGPS catalyzes the conversion of PRFAR and glutamine to IGP, AICAR and glutamate. The HisH subunit catalyzes the hydrolysis of glutamine to glutamate and ammonia as part of the synthesis of IGP and AICAR. The resulting ammonia molecule is channeled to the active site of HisF. The chain is Imidazole glycerol phosphate synthase subunit HisH from Bacillus anthracis (strain A0248).